The primary structure comprises 361 residues: MTEQKAIVTDAPKGGVKYTTIDMPEPEHYDAKLSPVYIGICGTDRGEVAGALSFTYNPEGENFLVLGHEALLRVDDARDNGYIKKGDLVVPLVRRPGKCINCRIGRQDNCSIGDPDKHEAGITGLHGFMRDVIYDDIEYLVKVEDPELGRIAVLTEPLKNVMKAFEVFDVVSKRSIFFGDDSTLIGKRMVIIGSGSEAFLYSFAGVDRGFDVTMVNRHDETENKLKIMDEFGVKFANYLKDMPEKIDLLVDTSGDPTTTFKFLRKVNNNGVVILFGTNGKAPGYPVDGEDIDYIVERNITIAGSVDAAKIHYVQALQSLSNWNRRHPDAMKSIITYEAKPSETNIFFQKPHGEIKTVIKWQ.

Cys-41 is a binding site for Zn(2+). Thr-43 provides a ligand contact to substrate. 2 residues coordinate Zn(2+): His-68 and Glu-69. Substrate contacts are provided by Glu-119, Glu-156, and Asn-160. Zn(2+) is bound at residue Glu-156. Residues 216 to 218 (NRH), 275 to 277 (FGT), 304 to 306 (SVD), and Lys-349 each bind NADP(+). A substrate-binding site is contributed by Asp-306.

This sequence belongs to the zinc-containing alcohol dehydrogenase family. Glucose 1-dehydrogenase subfamily. In terms of assembly, homotetramer. Zn(2+) serves as cofactor.

It catalyses the reaction D-glucose + NAD(+) = D-glucono-1,5-lactone + NADH + H(+). It carries out the reaction D-glucose + NADP(+) = D-glucono-1,5-lactone + NADPH + H(+). The catalysed reaction is D-galactose + NAD(+) = D-galactono-1,4-lactone + NADH + H(+). The enzyme catalyses D-galactose + NADP(+) = D-galactono-1,5-lactone + NADPH + H(+). Its function is as follows. Catalyzes the NAD(P)(+)-dependent oxidation of D-glucose to D-gluconate via gluconolactone. Is also significantly active with galactose as substrate, but not with mannose or glucose 6-phosphate. Can utilize both NAD(+) and NADP(+) as electron acceptor, with a marked preference for NADP(+). Physiologically, may be involved in the degradation of both glucose and galactose through a non-phosphorylative variant of the Entner-Doudoroff pathway. In Thermoplasma acidophilum (strain ATCC 25905 / DSM 1728 / JCM 9062 / NBRC 15155 / AMRC-C165), this protein is Glucose 1-dehydrogenase.